The following is a 1422-amino-acid chain: Cardiac-enriched FHL2-interacting protein (1422 aa).

The segment at 1 to 23 (MQGNKKCADGFSDTSSIGSVLDE) is disordered. Thr-119 is subject to Phosphothreonine. 9 disordered regions span residues 151 to 177 (RTEA…KFAH), 199 to 265 (AGVS…GRGK), 279 to 443 (SAFE…SSPF), 459 to 500 (LETS…KAPS), 516 to 718 (YSPL…SDSQ), 731 to 850 (FSTS…TNKH), 877 to 1127 (VSSE…HLER), 1142 to 1244 (TGAA…GWEP), and 1353 to 1422 (RQGS…EGVS). A compositionally biased stretch (polar residues) spans 201 to 210 (VSSTHQSSHQ). Composition is skewed to basic and acidic residues over residues 284 to 298 (WDAH…KDIT) and 305 to 315 (KAPKHYEDMPL). Residue Ser-327 is modified to Phosphoserine. A compositionally biased stretch (polar residues) spans 342–351 (SPSGIQSTSG). The segment covering 395–405 (GPHDASEDKKQ) has biased composition (basic and acidic residues). Polar residues predominate over residues 461-470 (TSDTQPVETS). Phosphoserine is present on Ser-472. Composition is skewed to basic and acidic residues over residues 481–495 (QEKE…DSYK), 524–537 (GFDE…DGKQ), and 579–588 (PAMDSRESFA). Residues 590–606 (SHPTFSSPSASSKTHFS) are compositionally biased toward low complexity. Basic and acidic residues-rich tracts occupy residues 611–622 (AAERNSHEKEEA), 635–644 (WHPDSRENLP), and 653–675 (CNRD…EKRL). The span at 731–744 (FSTSSSDQSFASFE) shows a compositional bias: low complexity. The span at 790-801 (GVEEHRQKETQR) shows a compositional bias: basic and acidic residues. Ser-815 bears the Phosphoserine mark. Basic and acidic residues predominate over residues 828 to 839 (ADKDTALSHAKD). Polar residues-rich tracts occupy residues 907–926 (SESQ…STEQ) and 944–954 (QDETSQQTRKG). Residues 975–991 (ADERLAHEKSRSADSGK) show a composition bias toward basic and acidic residues. Over residues 1048–1067 (AATSPNPSSLGGSSTCSPAA) the composition is skewed to polar residues. A compositionally biased stretch (pro residues) spans 1087 to 1099 (PPGPGPWASPGPS). Positions 1173-1184 (RRAKKLASKRRK) are enriched in basic residues. Over residues 1185–1202 (SDQMSEKHTEAWEGKSFT) the composition is skewed to basic and acidic residues. The segment covering 1353–1366 (RQGSSHRPQSSQGA) has biased composition (polar residues). The span at 1411–1422 (DDLEDFATEGVS) shows a compositional bias: acidic residues.

In terms of assembly, interacts with FHL2.

The protein localises to the cytoplasm. It is found in the myofibril. Its subcellular location is the sarcomere. The protein resides in the z line. In terms of biological role, plays an important role in cardiomyocyte hypertrophy via activation of the calcineurin/NFAT signaling pathway. This Rattus norvegicus (Rat) protein is Cardiac-enriched FHL2-interacting protein.